We begin with the raw amino-acid sequence, 64 residues long: H/ACA ribonucleoprotein complex subunit 3 (64 aa).

It belongs to the NOP10 family. Component of the box H/ACA small nucleolar ribonucleoprotein (H/ACA snoRNP) complex consisting of Nop60B, Gar1, NPH2 and Nop10, and associated with H/ACA-type snoRNAs.

Its subcellular location is the nucleus. It localises to the nucleolus. Functionally, component of the box H/ACA small nucleolar ribonucleoprotein (H/ACA snoRNP) complex, which catalyzes pseudouridylation of rRNA. This involves the isomerization of uridine such that the ribose is subsequently attached to C5, instead of the normal N1. Pseudouridine ('psi') residues may serve to stabilize the conformation of rRNAs. Required for ribosome biogenesis. H/ACA snoRNP complex-dependent ribosome biogenesis is important in female germline cell differentiation during oogenesis. The sequence is that of H/ACA ribonucleoprotein complex subunit 3 from Drosophila melanogaster (Fruit fly).